The chain runs to 239 residues: MEGTAESQTPDLRDVEGKVGRKTPEGLLRGLRGECDLGTSGDVLLPGASSTGHGLGDKIMALRMELAYLRAIDVKILQQLVTLNEGIEAVRWLLEERGTLTSHCSSLTSSQYSLTGGSPERSRRGSWDSLPDTSSTDRLDSVSIGSFLDTVAPRELDEQGHPGPSCPEIDWAKVIPSEDRARTEVDMTSTKLGSLTATWKLPGDGLQCGPPEPSEDDSAKQGFEAHWYWGQCQDDVTFL.

LRR repeat units lie at residues 55-83 (LGDK…LVTL) and 93-114 (LLEE…QYSL). Over residues 107–118 (LTSSQYSLTGGS) the composition is skewed to low complexity. Positions 107 to 140 (LTSSQYSLTGGSPERSRRGSWDSLPDTSSTDRLD) are disordered. Residues S118, S126, and S129 each carry the phosphoserine modification.

Forms a tripartite complex with CDC42BPA/CDC42BPB and MYO18A acting as an adapter connecting both. Its binding to CDC42BPA/CDC42BPB results in their activation by abolition of their negative autoregulation. Interacts with CDC42BPA and CDC42BPB. Phosphorylated.

Its subcellular location is the cytoplasm. In terms of biological role, acts as an activator of the canonical NF-kappa-B pathway and drive the production of pro-inflammatory cytokines. Promotes the antigen (Ag)-presenting and priming function of dendritic cells via the canonical NF-kappa-B pathway. In concert with MYO18A and CDC42BPA/CDC42BPB, is involved in modulating lamellar actomyosin retrograde flow that is crucial to cell protrusion and migration. Activates CDC42BPA/CDC42BPB and targets it to actomyosin through its interaction with MYO18A, leading to MYL9/MLC2 phosphorylation and MYH9/MYH10-dependent actomyosin assembly in the lamella. The protein is Leucine rich adaptor protein 1 (Lurap1) of Rattus norvegicus (Rat).